Here is a 396-residue protein sequence, read N- to C-terminus: Tyrosine--tRNA ligase (396 aa).

The short motif at 43–52 (PSSPDIHLGH) is the 'HIGH' region element. The 'KMSKS' region signature appears at 227–231 (KMSKS). ATP is bound at residue Lys230. In terms of domain architecture, S4 RNA-binding spans 338–396 (ICVIDFIIKADLAKSKSEARRLLEQGGVEINSAKISDPGTTVKCGDIIKAGKRRYSKAV).

This sequence belongs to the class-I aminoacyl-tRNA synthetase family. TyrS type 2 subfamily. As to quaternary structure, homodimer.

It is found in the cytoplasm. It catalyses the reaction tRNA(Tyr) + L-tyrosine + ATP = L-tyrosyl-tRNA(Tyr) + AMP + diphosphate + H(+). Its function is as follows. Catalyzes the attachment of tyrosine to tRNA(Tyr) in a two-step reaction: tyrosine is first activated by ATP to form Tyr-AMP and then transferred to the acceptor end of tRNA(Tyr). This Dehalococcoides mccartyi (strain ATCC BAA-2266 / KCTC 15142 / 195) (Dehalococcoides ethenogenes (strain 195)) protein is Tyrosine--tRNA ligase.